We begin with the raw amino-acid sequence, 350 residues long: Bifunctional methylenetetrahydrofolate dehydrogenase/cyclohydrolase, mitochondrial (350 aa).

Residues 1 to 35 (MAAASFITSLVTRLLRSAQSGRLHQRPFHLSAVRN) constitute a mitochondrion transit peptide. Residue Lys50 is modified to N6-acetyllysine; alternate. Residue Lys50 forms a Glycyl lysine isopeptide (Lys-Gly) (interchain with G-Cter in SUMO2); alternate linkage. Substrate-binding positions include 84 to 88 (YVLNK) and 131 to 133 (VQL). NAD(+)-binding positions include 200–202 (GRS) and Arg233. Residue 309–313 (PGGVG) participates in substrate binding.

It belongs to the tetrahydrofolate dehydrogenase/cyclohydrolase family. In terms of assembly, homodimer. The cofactor is Mg(2+).

Its subcellular location is the mitochondrion. It catalyses the reaction (6R)-5,10-methylene-5,6,7,8-tetrahydrofolate + NAD(+) = (6R)-5,10-methenyltetrahydrofolate + NADH. The catalysed reaction is (6R)-5,10-methenyltetrahydrofolate + H2O = (6R)-10-formyltetrahydrofolate + H(+). In terms of biological role, although its dehydrogenase activity is NAD-specific, it can also utilize NADP at a reduced efficiency. The polypeptide is Bifunctional methylenetetrahydrofolate dehydrogenase/cyclohydrolase, mitochondrial (MTHFD2) (Bos taurus (Bovine)).